Here is a 1056-residue protein sequence, read N- to C-terminus: Carbamoyl phosphate synthase large chain (1056 aa).

The segment at 1–397 (MPRRTDIKKV…GFKKALRSID (397 aa)) is carboxyphosphate synthetic domain. ATP contacts are provided by arginine 127, arginine 167, glycine 173, glycine 174, glutamate 206, valine 208, glutamate 213, glycine 239, valine 240, histidine 241, glutamine 282, and glutamate 294. In terms of domain architecture, ATP-grasp 1 spans 131 to 323 (KALMQKIGEP…IARVAAKIAI (193 aa)). Glutamine 282, glutamate 294, and asparagine 296 together coordinate Mg(2+). The Mn(2+) site is built by glutamine 282, glutamate 294, and asparagine 296. An oligomerization domain region spans residues 398 to 530 (TDINTHTNHN…YSTHGVTTDI (133 aa)). Residues 531-919 (IQNDKKKVLI…YKACISADNE (389 aa)) form a carbamoyl phosphate synthetic domain region. Residues 661-852 (SELLDALKIP…LAKVAAKVMI (192 aa)) form the ATP-grasp 2 domain. Positions 697, 736, 738, 743, 768, 769, 770, 771, 811, and 823 each coordinate ATP. 3 residues coordinate Mg(2+): glutamine 811, glutamate 823, and asparagine 825. The Mn(2+) site is built by glutamine 811, glutamate 823, and asparagine 825. Positions 918–1056 (NELPIEGNVF…PISHYLSEVE (139 aa)) constitute an MGS-like domain. The allosteric domain stretch occupies residues 920 to 1056 (LPIEGNVFIS…PISHYLSEVE (137 aa)).

It belongs to the CarB family. In terms of assembly, composed of two chains; the small (or glutamine) chain promotes the hydrolysis of glutamine to ammonia, which is used by the large (or ammonia) chain to synthesize carbamoyl phosphate. Tetramer of heterodimers (alpha,beta)4. Mg(2+) serves as cofactor. Mn(2+) is required as a cofactor.

The catalysed reaction is hydrogencarbonate + L-glutamine + 2 ATP + H2O = carbamoyl phosphate + L-glutamate + 2 ADP + phosphate + 2 H(+). The enzyme catalyses hydrogencarbonate + NH4(+) + 2 ATP = carbamoyl phosphate + 2 ADP + phosphate + 2 H(+). Its pathway is amino-acid biosynthesis; L-arginine biosynthesis; carbamoyl phosphate from bicarbonate: step 1/1. The protein operates within pyrimidine metabolism; UMP biosynthesis via de novo pathway; (S)-dihydroorotate from bicarbonate: step 1/3. Functionally, large subunit of the glutamine-dependent carbamoyl phosphate synthetase (CPSase). CPSase catalyzes the formation of carbamoyl phosphate from the ammonia moiety of glutamine, carbonate, and phosphate donated by ATP, constituting the first step of 2 biosynthetic pathways, one leading to arginine and/or urea and the other to pyrimidine nucleotides. The large subunit (synthetase) binds the substrates ammonia (free or transferred from glutamine from the small subunit), hydrogencarbonate and ATP and carries out an ATP-coupled ligase reaction, activating hydrogencarbonate by forming carboxy phosphate which reacts with ammonia to form carbamoyl phosphate. The chain is Carbamoyl phosphate synthase large chain from Methanosphaerula palustris (strain ATCC BAA-1556 / DSM 19958 / E1-9c).